We begin with the raw amino-acid sequence, 1605 residues long: GTPase-activating protein pac-1 (1605 aa).

Residues 1–574 (MEEHHRRLHV…QRFIALFNSS (574 aa)) are required for localization to adherens junctions. Disordered regions lie at residues 293 to 430 (QRHP…ISTS), 529 to 556 (MRSG…LNAP), and 574 to 593 (SKTS…RSRT). Residues 323 to 334 (SKEDPSEDTGHD) show a composition bias toward basic and acidic residues. 3 stretches are compositionally biased toward low complexity: residues 353–365 (RNAS…SSRS), 420–430 (TTSSTSSISTS), and 530–552 (RSGG…TSRS). The PH domain maps to 599-726 (RFALPGTILQ…WISVLQSSSE (128 aa)). 2 stretches are compositionally biased toward polar residues: residues 728–745 (GIAT…TTGR) and 846–855 (KNSQLQSPTA). Disordered regions lie at residues 728 to 752 (GIAT…NAVS) and 846 to 942 (KNSQ…AGAP). The segment covering 868 to 879 (SSSQTMATTSSS) has biased composition (low complexity). A compositionally biased stretch (basic residues) spans 908-917 (SGRKWKKSKA). Low complexity predominate over residues 928-941 (GSSSGSQQQGAAGA). Positions 948 to 1146 (VRIADCPTGS…TLIHYNLWMF (199 aa)) constitute a Rho-GAP domain. Disordered stretches follow at residues 1152-1176 (TEDA…YGVG), 1207-1258 (EGKG…AASV), 1277-1339 (SRQT…RRKR), 1438-1533 (TSDY…ARRH), and 1554-1605 (GIRK…DELL). Basic residues predominate over residues 1211-1229 (QKIKNMLRRNSRRDKSKSK). Polar residues-rich tracts occupy residues 1244–1257 (GWTQ…SAAS) and 1278–1300 (RQTV…RLDQ). Residues 1301 to 1312 (SPSLESSLGSLP) show a composition bias toward low complexity. Positions 1438-1453 (TSDYSTTSSAPLSTNP) are enriched in polar residues. The span at 1461–1476 (DQPNSSSDYASSDPSP) shows a compositional bias: low complexity. 2 stretches are compositionally biased toward polar residues: residues 1480–1493 (NPST…SNLA) and 1500–1515 (HATS…MSRS). The span at 1558-1575 (SSPDVSRDEVSDDEKNHQ) shows a compositional bias: basic and acidic residues.

As to quaternary structure, associated with the catenin-cadherin complex consisting of hmr-1, hmp-1 and hmp-2; this is mediated by interaction with picc-1.

It localises to the cytoplasm. The protein resides in the cell junction. The protein localises to the adherens junction. Functionally, GTPase-activating protein for members of the Rho subfamily including Rac1, RhoA and cdc42 and other Ras-related subfamilies including let-60. Mediates radial (inner-outer) polarity and gastrulation by excluding par-6 from contacted cell surfaces; acts by inactivating cdc42 at inner cell surfaces which limits active cdc42 to outer cell surfaces devoid of cell-cell contacts, where cdc42 can bind and recruit par-6. Required for blastomere polarization. The protein is GTPase-activating protein pac-1 (pac-1) of Caenorhabditis elegans.